The chain runs to 241 residues: uncharacterized protein (241 aa).

Disordered regions lie at residues 19 to 59 (ERDR…QQLG), 101 to 139 (VRRP…ASRS), and 152 to 182 (RGCR…KPCS). Positions 34–48 (ARGGRGLWTVGGGGS) are enriched in gly residues. Over residues 49-58 (PTETAESQQL) the composition is skewed to polar residues. Positions 106-118 (PSVPSPLPKPPVP) are enriched in pro residues.

This is an uncharacterized protein from Homo sapiens (Human).